Reading from the N-terminus, the 453-residue chain is Chromosomal replication initiator protein DnaA (453 aa).

The domain I, interacts with DnaA modulators stretch occupies residues 1–73; the sequence is MSKEEIWDKV…ADLIEKAIGT (73 aa). The segment at 73 to 114 is domain II; it reads TKLMPNFVIQEDLTEDKQVKDSAKAKSEAKPDVQAPQNSSED. The span at 91 to 103 shows a compositional bias: basic and acidic residues; it reads VKDSAKAKSEAKP. A disordered region spans residues 91 to 113; sequence VKDSAKAKSEAKPDVQAPQNSSE. The segment at 115–331 is domain III, AAA+ region; sequence QFNVHNTFET…GALTRVIAYS (217 aa). Residues G159, G161, K162, and T163 each coordinate ATP. The domain IV, binds dsDNA stretch occupies residues 332-453; sequence RLQNEAITTE…ENLEKEIRNQ (122 aa).

It belongs to the DnaA family. As to quaternary structure, oligomerizes as a right-handed, spiral filament on DNA at oriC.

It localises to the cytoplasm. Functionally, plays an essential role in the initiation and regulation of chromosomal replication. ATP-DnaA binds to the origin of replication (oriC) to initiate formation of the DNA replication initiation complex once per cell cycle. Binds the DnaA box (a 9 base pair repeat at the origin) and separates the double-stranded (ds)DNA. Forms a right-handed helical filament on oriC DNA; dsDNA binds to the exterior of the filament while single-stranded (ss)DNA is stabiized in the filament's interior. The ATP-DnaA-oriC complex binds and stabilizes one strand of the AT-rich DNA unwinding element (DUE), permitting loading of DNA polymerase. After initiation quickly degrades to an ADP-DnaA complex that is not apt for DNA replication. Binds acidic phospholipids. This is Chromosomal replication initiator protein DnaA from Staphylococcus carnosus (strain TM300).